The primary structure comprises 631 residues: Probable ATP-dependent RNA helicase DDX53 (631 aa).

Residues 48 to 109 (EPPLCFKIKN…EMKAKAKAAI (62 aa)) enclose the KH domain. The Q motif signature appears at 222 to 250 (RFKDAFQQYPDLLKSIIRVGIVKPTPIQS). ATP is bound by residues Lys-244, Gln-249, 268 to 273 (TGTGKT), and His-311. The Helicase ATP-binding domain maps to 253–428 (WPIILQGIDL…LSYLKDPMIV (176 aa)). The DEAD box signature appears at 376–379 (DEAD). The Helicase C-terminal domain maps to 440 to 601 (TVKQNIIVTT…SVPEDLVVMA (162 aa)).

This sequence belongs to the DEAD box helicase family. Expressed in testis. Wide expression in various cancer tissues and cancer cell lines.

It localises to the nucleus. It carries out the reaction ATP + H2O = ADP + phosphate + H(+). The polypeptide is Probable ATP-dependent RNA helicase DDX53 (DDX53) (Homo sapiens (Human)).